Reading from the N-terminus, the 770-residue chain is Transferrin receptor protein 1 (770 aa).

Residues 1 to 70 (MMDQARSAFS…KPKRCNGFIC (70 aa)) lie on the Cytoplasmic side of the membrane. The segment at 1 to 70 (MMDQARSAFS…KPKRCNGFIC (70 aa)) is mediates interaction with SH3BP4. Phosphoserine occurs at positions 10 and 19. The residue at position 20 (Tyr20) is a Phosphotyrosine. An Endocytosis signal motif is present at residues 20–23 (YTRF). Thr21 carries the phosphothreonine modification. Residue Ser24 is modified to Phosphoserine. The short motif at 61 to 64 (KPKR) is the Stop-transfer sequence element. 2 S-palmitoyl cysteine lipidation sites follow: Cys65 and Cys70. Residues 71 to 90 (YGTIAVVLFFLIGFMIGYLG) form a helical; Signal-anchor for type II membrane protein membrane-spanning segment. The Extracellular portion of the chain corresponds to 91–770 (YCKRVEPKAG…GDIWDIDNEF (680 aa)). A disordered region spans residues 102–122 (ERPTGTEALGTERTEPSETEE). O-linked (GalNAc...) threonine glycosylation occurs at Thr107. Residues 233–323 (SKATTVTGRL…GTGDPYTPGF (91 aa)) form the PA domain. 3 N-linked (GlcNAc...) asparagine glycosylation sites follow: Asn261, Asn327, and Asn384. Residues 579 to 770 (TMDLYENLNQ…GDIWDIDNEF (192 aa)) are ligand-binding. Positions 656-658 (RGD) match the Cell attachment site motif. 2 N-linked (GlcNAc...) asparagine glycosylation sites follow: Asn732 and Asn737.

This sequence belongs to the peptidase M28 family. M28B subfamily. Homodimer; disulfide-linked. Binds one transferrin molecule per subunit. Interacts with SH3BP4. Interacts with STEAP3; facilitates TFRC endocytosis in erythroid precursor cells. In terms of processing, stearoylated by ZDHHC6 which inhibits TFRC-mediated activation of the JNK pathway and promotes mitochondrial fragmentation. Stearoylation does not affect iron uptake. Post-translationally, N- and O-glycosylated, phosphorylated and palmitoylated.

It localises to the cell membrane. Its subcellular location is the melanosome. In terms of biological role, cellular uptake of iron occurs via receptor-mediated endocytosis of ligand-occupied transferrin receptor into specialized endosomes. Endosomal acidification leads to iron release. The apotransferrin-receptor complex is then recycled to the cell surface with a return to neutral pH and the concomitant loss of affinity of apotransferrin for its receptor. Transferrin receptor is necessary for development of erythrocytes and the nervous system. Positively regulates T and B cell proliferation through iron uptake. Acts as a lipid sensor that regulates mitochondrial fusion by regulating activation of the JNK pathway. When dietary levels of stearate (C18:0) are low, promotes activation of the JNK pathway, resulting in HUWE1-mediated ubiquitination and subsequent degradation of the mitofusin MFN2 and inhibition of mitochondrial fusion. When dietary levels of stearate (C18:0) are high, TFRC stearoylation inhibits activation of the JNK pathway and thus degradation of the mitofusin MFN2. Mediates uptake of NICOL1 into fibroblasts where it may regulate extracellular matrix production. The protein is Transferrin receptor protein 1 (TFRC) of Canis lupus familiaris (Dog).